Reading from the N-terminus, the 124-residue chain is p53-regulated apoptosis-inducing protein 1 (124 aa).

Residues 1-16 (MGSSSEASFRSAQASC) are compositionally biased toward polar residues. Residues 1 to 46 (MGSSSEASFRSAQASCSGARRQGLGRGDQNLSVMPPNGRAQTHTPG) form a disordered region.

In terms of tissue distribution, only found to be expressed in thymus.

The protein localises to the mitochondrion. Functionally, may play an important role in mediating p53/TP53-dependent apoptosis. This Homo sapiens (Human) protein is p53-regulated apoptosis-inducing protein 1 (TP53AIP1).